Consider the following 394-residue polypeptide: Phosphopentomutase (394 aa).

Mn(2+) contacts are provided by aspartate 13, aspartate 286, histidine 291, aspartate 327, histidine 328, and histidine 339.

Belongs to the phosphopentomutase family. Requires Mn(2+) as cofactor.

It is found in the cytoplasm. It carries out the reaction 2-deoxy-alpha-D-ribose 1-phosphate = 2-deoxy-D-ribose 5-phosphate. The catalysed reaction is alpha-D-ribose 1-phosphate = D-ribose 5-phosphate. It functions in the pathway carbohydrate degradation; 2-deoxy-D-ribose 1-phosphate degradation; D-glyceraldehyde 3-phosphate and acetaldehyde from 2-deoxy-alpha-D-ribose 1-phosphate: step 1/2. Isomerase that catalyzes the conversion of deoxy-ribose 1-phosphate (dRib-1-P) and ribose 1-phosphate (Rib-1-P) to deoxy-ribose 5-phosphate (dRib-5-P) and ribose 5-phosphate (Rib-5-P), respectively. The protein is Phosphopentomutase of Bacillus anthracis (strain A0248).